The chain runs to 257 residues: UPF0246 protein lpl1317 (257 aa).

The protein belongs to the UPF0246 family.

In Legionella pneumophila (strain Lens), this protein is UPF0246 protein lpl1317.